Here is a 380-residue protein sequence, read N- to C-terminus: Pectin lyase (380 aa).

Positions 1–20 (MRSASILSAALAAFAPLASA) are cleaved as a signal peptide. N-linked (GlcNAc...) asparagine glycosylation is present at N130.

Belongs to the polysaccharide lyase 1 family.

It is found in the secreted. The catalysed reaction is Eliminative cleavage of (1-&gt;4)-alpha-D-galacturonan methyl ester to give oligosaccharides with 4-deoxy-6-O-methyl-alpha-D-galact-4-enuronosyl groups at their non-reducing ends.. This chain is Pectin lyase (PNLA), found in Colletotrichum gloeosporioides (Anthracnose fungus).